A 257-amino-acid polypeptide reads, in one-letter code: Zinc transporter ZupT (257 aa).

The next 3 membrane-spanning stretches (helical) occupy residues leucine 5–glycine 25, leucine 32–methionine 52, and glycine 61–leucine 81. Residues asparagine 120 and glutamate 123 each contribute to the Fe(2+) site. Zn(2+) contacts are provided by glutamate 123 and histidine 148. 4 helical membrane-spanning segments follow: residues leucine 137–alanine 157, isoleucine 171–isoleucine 191, methionine 195–leucine 215, and glycine 236–isoleucine 256. Residues asparagine 149, glutamate 152, and glutamate 181 each coordinate Fe(2+). Glutamate 152 contacts Zn(2+).

The protein belongs to the ZIP transporter (TC 2.A.5) family. ZupT subfamily.

It is found in the cell inner membrane. It carries out the reaction Zn(2+)(in) = Zn(2+)(out). Functionally, mediates zinc uptake. May also transport other divalent cations. This is Zinc transporter ZupT from Escherichia coli O7:K1 (strain IAI39 / ExPEC).